Reading from the N-terminus, the 235-residue chain is Class A basic helix-loop-helix protein 9 (235 aa).

Disordered regions lie at residues 1–69 (MLRG…RRMA) and 132–235 (GHLE…HPRS). The span at 55–67 (RRRARPVRSKARR) shows a compositional bias: basic residues. Residues 65–117 (ARRMAANVRERKRILDYNEAFNALRRALRHDLGGKRLSKIATLRRAIHRIAAL) enclose the bHLH domain.

As to quaternary structure, heterodimer. Efficient DNA binding requires dimerization with another bHLH protein. Interacts with TCF3, TCF4, and TCF12.

It localises to the nucleus. The protein resides in the cytoplasm. Functionally, transcription factor, which play a role in limb development. Is an essential player in the regulatory network governing transcription of genes implicated in limb morphogenesis. This chain is Class A basic helix-loop-helix protein 9 (BHLHA9), found in Homo sapiens (Human).